The chain runs to 255 residues: Gene 54 protein (255 aa).

The chain is Gene 54 protein (54) from Mycobacterium (Mycobacteriophage L5).